The sequence spans 132 residues: Small ribosomal subunit protein uS8 (132 aa).

This sequence belongs to the universal ribosomal protein uS8 family. Part of the 30S ribosomal subunit. Contacts proteins S5 and S12.

In terms of biological role, one of the primary rRNA binding proteins, it binds directly to 16S rRNA central domain where it helps coordinate assembly of the platform of the 30S subunit. The chain is Small ribosomal subunit protein uS8 from Borrelia turicatae (strain 91E135).